Here is a 283-residue protein sequence, read N- to C-terminus: NAD kinase (283 aa).

Residue aspartate 66 is the Proton acceptor of the active site. Residues 66–67, 140–141, arginine 151, lysine 168, aspartate 170, 181–186, and glutamine 240 contribute to the NAD(+) site; these read DG, ND, and TGYCLS.

The protein belongs to the NAD kinase family. Requires a divalent metal cation as cofactor.

It localises to the cytoplasm. The catalysed reaction is NAD(+) + ATP = ADP + NADP(+) + H(+). In terms of biological role, involved in the regulation of the intracellular balance of NAD and NADP, and is a key enzyme in the biosynthesis of NADP. Catalyzes specifically the phosphorylation on 2'-hydroxyl of the adenosine moiety of NAD to yield NADP. The chain is NAD kinase from Geobacter metallireducens (strain ATCC 53774 / DSM 7210 / GS-15).